We begin with the raw amino-acid sequence, 197 residues long: Adenylyl-sulfate kinase (197 aa).

Position 33–40 (33–40 (GLSGSGKS)) interacts with ATP. The Phosphoserine intermediate role is filled by Ser-107.

This sequence belongs to the APS kinase family.

It carries out the reaction adenosine 5'-phosphosulfate + ATP = 3'-phosphoadenylyl sulfate + ADP + H(+). It participates in sulfur metabolism; hydrogen sulfide biosynthesis; sulfite from sulfate: step 2/3. Functionally, catalyzes the synthesis of activated sulfate. This Bacillus pumilus (strain SAFR-032) protein is Adenylyl-sulfate kinase.